Here is a 506-residue protein sequence, read N- to C-terminus: SPbeta prophage-derived uncharacterized protein YonE (506 aa).

Positions 473-506 are disordered; the sequence is YTFTGNEVGRPNEGNKNNDNTVKSATSNGNDNPI. The segment covering 486–506 has biased composition (polar residues); the sequence is GNKNNDNTVKSATSNGNDNPI.

This Bacillus subtilis (strain 168) protein is SPbeta prophage-derived uncharacterized protein YonE (yonE).